The following is a 388-amino-acid chain: Cystathionine gamma-synthase (388 aa).

Lysine 208 is subject to N6-(pyridoxal phosphate)lysine.

Belongs to the trans-sulfuration enzymes family. As to quaternary structure, homotetramer. Requires pyridoxal 5'-phosphate as cofactor.

The protein localises to the cytoplasm. It catalyses the reaction O-succinyl-L-homoserine + L-cysteine = L,L-cystathionine + succinate + H(+). Its function is as follows. Catalyzes the formation of L-cystathionine from O-succinyl-L-homoserine (OSHS) and L-cysteine, via a gamma-replacement reaction. In the absence of thiol, catalyzes gamma-elimination to form 2-oxobutanoate, succinate and ammonia. In Mycobacterium leprae (strain TN), this protein is Cystathionine gamma-synthase (metB).